A 292-amino-acid chain; its full sequence is N-acetylneuraminate lyase (292 aa).

The aceneuramate site is built by Ser-47 and Thr-48. The active-site Proton donor is the Tyr-136. Residue Lys-164 is the Schiff-base intermediate with substrate of the active site. Aceneuramate is bound by residues Thr-166, Gly-188, Asp-190, Glu-191, and Ser-207.

It belongs to the DapA family. NanA subfamily. As to quaternary structure, homotetramer.

Its subcellular location is the cytoplasm. It carries out the reaction aceneuramate = aldehydo-N-acetyl-D-mannosamine + pyruvate. Its pathway is amino-sugar metabolism; N-acetylneuraminate degradation; D-fructose 6-phosphate from N-acetylneuraminate: step 1/5. In terms of biological role, catalyzes the reversible aldol cleavage of N-acetylneuraminic acid (sialic acid; Neu5Ac) to form pyruvate and N-acetylmannosamine (ManNAc) via a Schiff base intermediate. The sequence is that of N-acetylneuraminate lyase from Actinobacillus pleuropneumoniae serotype 5b (strain L20).